The chain runs to 552 residues: MTKYVFVTGGVVSSLGKGIAAASLAAILESRGLKVTLLKLDPYINVDPGTMSPFQHGEVFVTEDGAETDLDLGHYERFISTKMRKANNFTTGQIYESVIRKERRGDYLGKTVQVIPHITNEIQAFIERGAASATCGEPDVAIVEIGGTVGDIESLPFLEAARQMSLRLGRNSACFVHLTLVPYVATAGELKTKPTQHSVQKLREIGILPHVLLCRADRRIPDDESKKISMFSNVPEDAVISVWDADSIYKIPQMLHDQGLDRIICEELKLSPKDADLSMWSALVEKLENPKQEVTIGMVGKYVDLTESYKSLIEALRHASIHTSTKVNIEYIDSEELETNGVDSLKHLDAVLVPGGFGRRGTEGKIAAVRYARESKVPYLGICLGMQLAVIEFARDVVGLKQANSTEFDPDTPERVVALITEWYDREGKVETRTEESDLGGTMRLGSQRCPIKPGTMAEEIYGKDVNERHRHRYEVNNRFVPQLEAGGLIISARTPSEDLPEMMELPRSMHPWFVGVQFHPEFTSTPRDGHPLFKSFVEAALANKQARGVQA.

The amidoligase domain stretch occupies residues 1-270; the sequence is MTKYVFVTGG…DRIICEELKL (270 aa). Ser-13 contributes to the CTP binding site. Residue Ser-13 participates in UTP binding. ATP-binding positions include 14 to 19 and Asp-71; that span reads SLGKGI. Mg(2+)-binding residues include Asp-71 and Glu-144. Residues 151–153, 191–196, and Lys-227 each bind CTP; these read DIE and KTKPTQ. UTP is bound by residues 191–196 and Lys-227; that span reads KTKPTQ. Residues 295 to 547 enclose the Glutamine amidotransferase type-1 domain; the sequence is TIGMVGKYVD…VEAALANKQA (253 aa). Gly-356 serves as a coordination point for L-glutamine. Cys-383 (nucleophile; for glutamine hydrolysis) is an active-site residue. L-glutamine-binding positions include 384–387, Glu-407, and Arg-473; that span reads LGMQ. Residues His-520 and Glu-522 contribute to the active site.

It belongs to the CTP synthase family. Homotetramer.

It catalyses the reaction UTP + L-glutamine + ATP + H2O = CTP + L-glutamate + ADP + phosphate + 2 H(+). The enzyme catalyses L-glutamine + H2O = L-glutamate + NH4(+). It carries out the reaction UTP + NH4(+) + ATP = CTP + ADP + phosphate + 2 H(+). Its pathway is pyrimidine metabolism; CTP biosynthesis via de novo pathway; CTP from UDP: step 2/2. Allosterically activated by GTP, when glutamine is the substrate; GTP has no effect on the reaction when ammonia is the substrate. The allosteric effector GTP functions by stabilizing the protein conformation that binds the tetrahedral intermediate(s) formed during glutamine hydrolysis. Inhibited by the product CTP, via allosteric rather than competitive inhibition. Its function is as follows. Catalyzes the ATP-dependent amination of UTP to CTP with either L-glutamine or ammonia as the source of nitrogen. Regulates intracellular CTP levels through interactions with the four ribonucleotide triphosphates. This chain is CTP synthase, found in Burkholderia cenocepacia (strain ATCC BAA-245 / DSM 16553 / LMG 16656 / NCTC 13227 / J2315 / CF5610) (Burkholderia cepacia (strain J2315)).